The following is a 366-amino-acid chain: Ubiquitin carboxyl-terminal hydrolase 46 (366 aa).

The region spanning 35–365 (FGLVNFGNTC…SGYILFYQSR (331 aa)) is the USP domain. The active-site Nucleophile is Cys44. Zn(2+) contacts are provided by Cys182, Cys185, Cys229, and Cys232. His313 functions as the Proton acceptor in the catalytic mechanism.

It belongs to the peptidase C19 family. USP12/USP46 subfamily. Interacts with WDR48. Interacts with WDR20. Interacts with DMWD. Component of the USP46/WDR20/WDR48 deubiquitinating complex. As to expression, detected in lung and spleen, and at lower levels in brain, kidney, testis and liver.

It is found in the cytoplasm. The enzyme catalyses Thiol-dependent hydrolysis of ester, thioester, amide, peptide and isopeptide bonds formed by the C-terminal Gly of ubiquitin (a 76-residue protein attached to proteins as an intracellular targeting signal).. Its function is as follows. Deubiquitinating enzyme that plays a role in behavior, possibly by regulating GABA action. May act by mediating the deubiquitination of GAD1/GAD67. Has almost no deubiquitinating activity by itself and requires the interaction with WDR48 to have a high activity. Not involved in deubiquitination of monoubiquitinated FANCD2. This is Ubiquitin carboxyl-terminal hydrolase 46 from Rattus norvegicus (Rat).